Reading from the N-terminus, the 203-residue chain is Holliday junction branch migration complex subunit RuvA (203 aa).

The interval 1–63 is domain I; it reads MIGKLSGRVD…EDHINLYGFL (63 aa). Residues 64-142 form a domain II region; that stretch reads SLEEKSFFNL…KISSSSAAIK (79 aa). The flexible linker stretch occupies residues 143–149; that stretch reads DSLNIKG. Residues 150–203 are domain III; the sequence is ITPVASSEVIKALINMGFSRFEAQNAVQEIITKNPEISIDELIRTALKNRNSNF.

This sequence belongs to the RuvA family. In terms of assembly, homotetramer. Forms an RuvA(8)-RuvB(12)-Holliday junction (HJ) complex. HJ DNA is sandwiched between 2 RuvA tetramers; dsDNA enters through RuvA and exits via RuvB. An RuvB hexamer assembles on each DNA strand where it exits the tetramer. Each RuvB hexamer is contacted by two RuvA subunits (via domain III) on 2 adjacent RuvB subunits; this complex drives branch migration. In the full resolvosome a probable DNA-RuvA(4)-RuvB(12)-RuvC(2) complex forms which resolves the HJ.

The protein resides in the cytoplasm. Functionally, the RuvA-RuvB-RuvC complex processes Holliday junction (HJ) DNA during genetic recombination and DNA repair, while the RuvA-RuvB complex plays an important role in the rescue of blocked DNA replication forks via replication fork reversal (RFR). RuvA specifically binds to HJ cruciform DNA, conferring on it an open structure. The RuvB hexamer acts as an ATP-dependent pump, pulling dsDNA into and through the RuvAB complex. HJ branch migration allows RuvC to scan DNA until it finds its consensus sequence, where it cleaves and resolves the cruciform DNA. The chain is Holliday junction branch migration complex subunit RuvA from Rickettsia bellii (strain OSU 85-389).